The following is a 284-amino-acid chain: MAELVPFAVPIESDKTLLVWELSSGPTAEALHHSLFTAFSQFGLLYSVRVFPNAAVAHPGFYAVIKFYSARAARRAQKACDRKQLFQKSPVKVRLGTRHKAVQHQALALNSSRCQELANYYFGFNGWSKRIIKLQELSDLEERENEDSMVPLPKQSLKFFCALEVMLPSYDCRSPGVGLVEKPVDKVEEGPLSFLMKRKTAQKLAIQKALSDAFQKLLIVVLESGKIAVEYRPSEDIIDVRCEEELHGLIQVHCSPWKQCGQEEEEYLSDFSLEEEEFRLPELD.

The interval 1–92 is necessary for nuclear localization and for nucleolar accumulation in response to heat shock; it reads MAELVPFAVP…KQLFQKSPVK (92 aa). An RRM domain is found at 15–98; that stretch reads KTLLVWELSS…SPVKVRLGTR (84 aa). A necessary for nuclear and nucleolar localization region spans residues 90-133; sequence PVKVRLGTRHKAVQHQALALNSSRCQELANYYFGFNGWSKRIIK.

In terms of assembly, homodimer.

It is found in the nucleus. It localises to the cytoplasm. Its subcellular location is the nucleolus. The protein resides in the cajal body. The protein localises to the PML body. In terms of biological role, may confer resistance to the antitumor agent cisplatin. Binds to DNA and RNA. This Macaca fascicularis (Crab-eating macaque) protein is RAD52 motif-containing protein 1 (RDM1).